A 299-amino-acid chain; its full sequence is 4-diphosphocytidyl-2-C-methyl-D-erythritol kinase (299 aa).

The active site involves Lys22. Residue 108–118 (PVGAGLGGGSS) participates in ATP binding. Asp150 is an active-site residue.

The protein belongs to the GHMP kinase family. IspE subfamily.

The enzyme catalyses 4-CDP-2-C-methyl-D-erythritol + ATP = 4-CDP-2-C-methyl-D-erythritol 2-phosphate + ADP + H(+). Its pathway is isoprenoid biosynthesis; isopentenyl diphosphate biosynthesis via DXP pathway; isopentenyl diphosphate from 1-deoxy-D-xylulose 5-phosphate: step 3/6. In terms of biological role, catalyzes the phosphorylation of the position 2 hydroxy group of 4-diphosphocytidyl-2C-methyl-D-erythritol. This is 4-diphosphocytidyl-2-C-methyl-D-erythritol kinase from Desulfotalea psychrophila (strain LSv54 / DSM 12343).